The following is a 74-amino-acid chain: Ubiquitin-like protein FUBI (74 aa).

It belongs to the ubiquitin family.

The sequence is that of Ubiquitin-like protein FUBI (FAU) from Bos taurus (Bovine).